Here is a 205-residue protein sequence, read N- to C-terminus: Dephospho-CoA kinase (205 aa).

A DPCK domain is found at Arg13–Leu205. Ala21–Thr26 is an ATP binding site.

Belongs to the CoaE family.

It localises to the cytoplasm. It carries out the reaction 3'-dephospho-CoA + ATP = ADP + CoA + H(+). It functions in the pathway cofactor biosynthesis; coenzyme A biosynthesis; CoA from (R)-pantothenate: step 5/5. Its function is as follows. Catalyzes the phosphorylation of the 3'-hydroxyl group of dephosphocoenzyme A to form coenzyme A. The protein is Dephospho-CoA kinase of Prochlorococcus marinus (strain MIT 9312).